Here is a 392-residue protein sequence, read N- to C-terminus: Serine protease ea (392 aa).

The N-terminal stretch at 1 to 19 is a signal peptide; the sequence is MLKPSIICLFLGILAKSSA. Positions 20 to 127 are cleaved as a propeptide — activation peptide; the sequence is GQFYFPNEAA…GQCGNILSNR (108 aa). The region spanning 36–89 is the Clip domain; sequence RCITPNRERALCIHLEDCKYLYGLLTTTPLRDTDRLYLSRSQCGYTNGKVLICC. Disulfide bonds link C37–C88, C47–C78, and C53–C89. An N-linked (GlcNAc...) asparagine glycan is attached at N107. Intrachain disulfides connect C120–C260, C158–C174, C202–C212, C307–C324, and C334–C367. The Peptidase S1 domain maps to 128-391; that stretch reads IYGGMKTKID…YVDWIQNTIE (264 aa). H173 (charge relay system) is an active-site residue. Ca(2+) is bound by residues E193, D195, T198, and D201. D240 functions as the Charge relay system in the catalytic mechanism. S338 (charge relay system) is an active-site residue.

The protein belongs to the peptidase S1 family. CLIP subfamily. As to quaternary structure, interacts with Spn27A; the two proteins are covalently linked leading to inhibition of ea catalytic activity. Interacts (via Peptidase domain) with snk (via N-terminal prodomain); leads to proteolytic activation of ea by snk. Sulfation of a vitelline membrane component by pip is required for proteolytic cleavage of ea by snk but not for the interaction of ea with snk. In terms of processing, proteolytically cleaved by snk. Activation peptide and active catalytic domain remain associated by a disulfide bond. Processed ea/easter is present in extremely low amounts in the early embryo as it is rapidly converted into a high molecular mass complex made up of ea covalently bound to the serpin Spn27A. Zymogen activation is also controlled by a negative feedback loop from Dorsal.

It is found in the secreted. Activated proteolytically by snk; activation requires both activation of the ndl-gd-snk protease cascade and sulfation of a vitelline membrane component by pip. Inhibited by binding of the serpin Spn27A. Its function is as follows. Component of the extracellular signaling pathway that establishes the dorsal-ventral pathway of the embryo. A protease cascade involving ndl, gd, snk and ea results in activation of the spz Toll receptor ligand; acts downstream of ndl, gd and snk and is required for proteolytic processing of spz. Activation of ea requires both activation of the ndl-gd-snk protease cascade and sulfation of a vitelline membrane component by pip. Localized activation of the Toll receptor in the ventral region of the embryo defines cell identities along the dorsal-ventral continuum. This Drosophila melanogaster (Fruit fly) protein is Serine protease ea.